We begin with the raw amino-acid sequence, 508 residues long: Photosystem II CP47 reaction center protein (508 aa).

Transmembrane regions (helical) follow at residues 21 to 36, 101 to 115, 140 to 156, 203 to 218, 237 to 252, and 457 to 472; these read SVHI…WAGS, IVFS…IWHW, GIHL…FGAF, IAAG…FHLS, VLSS…AFVV, and SFAL…HGAR.

The protein belongs to the PsbB/PsbC family. PsbB subfamily. PSII is composed of 1 copy each of membrane proteins PsbA, PsbB, PsbC, PsbD, PsbE, PsbF, PsbH, PsbI, PsbJ, PsbK, PsbL, PsbM, PsbT, PsbX, PsbY, PsbZ, Psb30/Ycf12, at least 3 peripheral proteins of the oxygen-evolving complex and a large number of cofactors. It forms dimeric complexes. Binds multiple chlorophylls. PSII binds additional chlorophylls, carotenoids and specific lipids. is required as a cofactor.

Its subcellular location is the plastid. It localises to the chloroplast thylakoid membrane. One of the components of the core complex of photosystem II (PSII). It binds chlorophyll and helps catalyze the primary light-induced photochemical processes of PSII. PSII is a light-driven water:plastoquinone oxidoreductase, using light energy to abstract electrons from H(2)O, generating O(2) and a proton gradient subsequently used for ATP formation. This Dioscorea elephantipes (Elephant's foot yam) protein is Photosystem II CP47 reaction center protein.